The sequence spans 456 residues: UDP-N-acetylmuramoylalanine--D-glutamate ligase (456 aa).

122–128 contributes to the ATP binding site; it reads GSNGKST.

This sequence belongs to the MurCDEF family.

Its subcellular location is the cytoplasm. It catalyses the reaction UDP-N-acetyl-alpha-D-muramoyl-L-alanine + D-glutamate + ATP = UDP-N-acetyl-alpha-D-muramoyl-L-alanyl-D-glutamate + ADP + phosphate + H(+). It functions in the pathway cell wall biogenesis; peptidoglycan biosynthesis. In terms of biological role, cell wall formation. Catalyzes the addition of glutamate to the nucleotide precursor UDP-N-acetylmuramoyl-L-alanine (UMA). The chain is UDP-N-acetylmuramoylalanine--D-glutamate ligase from Saccharophagus degradans (strain 2-40 / ATCC 43961 / DSM 17024).